Consider the following 314-residue polypeptide: DNA-directed RNA polymerase subunit alpha (314 aa).

The segment at 1–228 (MIEIEKPKIE…EHLNIFVGLT (228 aa)) is alpha N-terminal domain (alpha-NTD). The alpha C-terminal domain (alpha-CTD) stretch occupies residues 245 to 314 (KEKVLEMTIE…ELGLSLRKDD (70 aa)).

It belongs to the RNA polymerase alpha chain family. As to quaternary structure, homodimer. The RNAP catalytic core consists of 2 alpha, 1 beta, 1 beta' and 1 omega subunit. When a sigma factor is associated with the core the holoenzyme is formed, which can initiate transcription.

It carries out the reaction RNA(n) + a ribonucleoside 5'-triphosphate = RNA(n+1) + diphosphate. Its function is as follows. DNA-dependent RNA polymerase catalyzes the transcription of DNA into RNA using the four ribonucleoside triphosphates as substrates. This Geobacillus thermodenitrificans (strain NG80-2) protein is DNA-directed RNA polymerase subunit alpha.